A 434-amino-acid polypeptide reads, in one-letter code: Adenylosuccinate synthetase (434 aa).

GTP is bound by residues 22–28 (GDEGKGK) and 50–52 (GHT). Asp23 (proton acceptor) is an active-site residue. Residues Asp23 and Gly50 each coordinate Mg(2+). Residues 23–26 (DEGK), 48–51 (NAGH), Thr139, Arg153, Gln234, Thr249, and Arg313 each bind IMP. The Proton donor role is filled by His51. Position 309–315 (309–315 (ATTGRKR)) interacts with substrate. GTP-binding positions include Arg315, 341 to 343 (KLD), and 423 to 425 (SVG).

The protein belongs to the adenylosuccinate synthetase family. As to quaternary structure, homodimer. The cofactor is Mg(2+).

Its subcellular location is the cytoplasm. It carries out the reaction IMP + L-aspartate + GTP = N(6)-(1,2-dicarboxyethyl)-AMP + GDP + phosphate + 2 H(+). It participates in purine metabolism; AMP biosynthesis via de novo pathway; AMP from IMP: step 1/2. Functionally, plays an important role in the de novo pathway of purine nucleotide biosynthesis. Catalyzes the first committed step in the biosynthesis of AMP from IMP. This chain is Adenylosuccinate synthetase, found in Chlorobium chlorochromatii (strain CaD3).